The primary structure comprises 47 residues: Large ribosomal subunit protein bL34 (47 aa).

Positions 1–47 are disordered; it reads MVTEGLKPHISIKKKKRKSGFLARMRTKSGRKIIARRRRKGRKRLAP. Residues 10–47 show a composition bias toward basic residues; that stretch reads ISIKKKKRKSGFLARMRTKSGRKIIARRRRKGRKRLAP.

The protein belongs to the bacterial ribosomal protein bL34 family.

The chain is Large ribosomal subunit protein bL34 (rpmH) from Aquifex aeolicus (strain VF5).